A 291-amino-acid polypeptide reads, in one-letter code: Phosphate import ATP-binding protein PstB (291 aa).

Over residues 1-17 (MANTNVKEKELAKHTDQ) the composition is skewed to basic and acidic residues. Residues 1–40 (MANTNVKEKELAKHTDQSQESISTVVSSNEVKHNKESDSN) are disordered. Over residues 18-29 (SQESISTVVSSN) the composition is skewed to polar residues. Basic and acidic residues predominate over residues 30 to 40 (EVKHNKESDSN). The ABC transporter domain maps to 45-286 (YSTQNLDLWY…PSDKQTEDYI (242 aa)). Residue 77–84 (GPSGCGKS) coordinates ATP.

Belongs to the ABC transporter superfamily. Phosphate importer (TC 3.A.1.7) family. In terms of assembly, the complex is composed of two ATP-binding proteins (PstB), two transmembrane proteins (PstC and PstA) and a solute-binding protein (PstS).

The protein localises to the cell membrane. The catalysed reaction is phosphate(out) + ATP + H2O = ADP + 2 phosphate(in) + H(+). Its function is as follows. Part of the ABC transporter complex PstSACB involved in phosphate import. Responsible for energy coupling to the transport system. The chain is Phosphate import ATP-binding protein PstB from Staphylococcus haemolyticus (strain JCSC1435).